We begin with the raw amino-acid sequence, 430 residues long: Tol-Pal system protein TolB (430 aa).

The signal sequence occupies residues 1-21; it reads MRRFVTLLIALLCLSATAVQA.

This sequence belongs to the TolB family. The Tol-Pal system is composed of five core proteins: the inner membrane proteins TolA, TolQ and TolR, the periplasmic protein TolB and the outer membrane protein Pal. They form a network linking the inner and outer membranes and the peptidoglycan layer.

The protein resides in the periplasm. Functionally, part of the Tol-Pal system, which plays a role in outer membrane invagination during cell division and is important for maintaining outer membrane integrity. In Syntrophotalea carbinolica (strain DSM 2380 / NBRC 103641 / GraBd1) (Pelobacter carbinolicus), this protein is Tol-Pal system protein TolB.